A 287-amino-acid chain; its full sequence is Large ribosomal subunit protein uL2 (287 aa).

The tract at residues 221–287 (RGSVMNPCDH…SKRSRGGRDS (67 aa)) is disordered. A compositionally biased stretch (basic residues) spans 258 to 287 (KTRKRNKPSNKFVLRKRRKTSKRSRGGRDS).

This sequence belongs to the universal ribosomal protein uL2 family. In terms of assembly, part of the 50S ribosomal subunit. Forms a bridge to the 30S subunit in the 70S ribosome.

One of the primary rRNA binding proteins. Required for association of the 30S and 50S subunits to form the 70S ribosome, for tRNA binding and peptide bond formation. It has been suggested to have peptidyltransferase activity; this is somewhat controversial. Makes several contacts with the 16S rRNA in the 70S ribosome. In Synechococcus sp. (strain RCC307), this protein is Large ribosomal subunit protein uL2.